The primary structure comprises 432 residues: 3-phosphoshikimate 1-carboxyvinyltransferase (432 aa).

3-phosphoshikimate is bound by residues lysine 23, serine 24, and arginine 28. Residue lysine 23 participates in phosphoenolpyruvate binding. Phosphoenolpyruvate contacts are provided by glycine 95 and arginine 123. The 3-phosphoshikimate site is built by serine 167, glutamine 169, aspartate 317, and lysine 344. Glutamine 169 serves as a coordination point for phosphoenolpyruvate. Aspartate 317 functions as the Proton acceptor in the catalytic mechanism. Residues arginine 348 and arginine 390 each contribute to the phosphoenolpyruvate site.

It belongs to the EPSP synthase family. As to quaternary structure, monomer.

It localises to the cytoplasm. It carries out the reaction 3-phosphoshikimate + phosphoenolpyruvate = 5-O-(1-carboxyvinyl)-3-phosphoshikimate + phosphate. It functions in the pathway metabolic intermediate biosynthesis; chorismate biosynthesis; chorismate from D-erythrose 4-phosphate and phosphoenolpyruvate: step 6/7. Its function is as follows. Catalyzes the transfer of the enolpyruvyl moiety of phosphoenolpyruvate (PEP) to the 5-hydroxyl of shikimate-3-phosphate (S3P) to produce enolpyruvyl shikimate-3-phosphate and inorganic phosphate. In Staphylococcus carnosus (strain TM300), this protein is 3-phosphoshikimate 1-carboxyvinyltransferase.